The sequence spans 115 residues: MNIQCKRVYDPAEQSDGYRILVDRLWPRGIKKTDLALDEWDKEITPSTELRKAFHGEVVDYATFREQYLAELAQHEQEGKRLADIAKKQPLTLLYSAKNTTQNHALVLADWLRSL.

The protein to M.tuberculosis Rv3073c.

This is an uncharacterized protein from Escherichia coli (strain K12).